A 154-amino-acid polypeptide reads, in one-letter code: Myoglobin (154 aa).

Positions glycine 2 to lysine 148 constitute a Globin domain. Serine 4 carries the phosphoserine modification. Histidine 65 serves as a coordination point for nitrite. Residue histidine 65 coordinates O2. Threonine 68 carries the post-translational modification Phosphothreonine. Residue histidine 94 participates in heme b binding.

Belongs to the globin family. Monomeric.

It localises to the cytoplasm. Its subcellular location is the sarcoplasm. The enzyme catalyses Fe(III)-heme b-[protein] + nitric oxide + H2O = Fe(II)-heme b-[protein] + nitrite + 2 H(+). The catalysed reaction is H2O2 + AH2 = A + 2 H2O. Its function is as follows. Monomeric heme protein which primary function is to store oxygen and facilitate its diffusion within muscle tissues. Reversibly binds oxygen through a pentacoordinated heme iron and enables its timely and efficient release as needed during periods of heightened demand. Depending on the oxidative conditions of tissues and cells, and in addition to its ability to bind oxygen, it also has a nitrite reductase activity whereby it regulates the production of bioactive nitric oxide. Under stress conditions, like hypoxia and anoxia, it also protects cells against reactive oxygen species thanks to its pseudoperoxidase activity. This chain is Myoglobin (MB), found in Ochotona curzoniae (Black-lipped pika).